The following is a 244-amino-acid chain: Biosynthetic peptidoglycan transglycosylase (244 aa).

A helical transmembrane segment spans residues 23 to 43 (LVVIGAWLAGILLFSFLPVPF).

The protein belongs to the glycosyltransferase 51 family.

The protein resides in the cell inner membrane. The enzyme catalyses [GlcNAc-(1-&gt;4)-Mur2Ac(oyl-L-Ala-gamma-D-Glu-L-Lys-D-Ala-D-Ala)](n)-di-trans,octa-cis-undecaprenyl diphosphate + beta-D-GlcNAc-(1-&gt;4)-Mur2Ac(oyl-L-Ala-gamma-D-Glu-L-Lys-D-Ala-D-Ala)-di-trans,octa-cis-undecaprenyl diphosphate = [GlcNAc-(1-&gt;4)-Mur2Ac(oyl-L-Ala-gamma-D-Glu-L-Lys-D-Ala-D-Ala)](n+1)-di-trans,octa-cis-undecaprenyl diphosphate + di-trans,octa-cis-undecaprenyl diphosphate + H(+). It participates in cell wall biogenesis; peptidoglycan biosynthesis. Functionally, peptidoglycan polymerase that catalyzes glycan chain elongation from lipid-linked precursors. This Pectobacterium carotovorum subsp. carotovorum (strain PC1) protein is Biosynthetic peptidoglycan transglycosylase.